The chain runs to 141 residues: Large ribosomal subunit protein uL16 (141 aa).

It belongs to the universal ribosomal protein uL16 family. In terms of assembly, part of the 50S ribosomal subunit.

In terms of biological role, binds 23S rRNA and is also seen to make contacts with the A and possibly P site tRNAs. This is Large ribosomal subunit protein uL16 from Campylobacter hominis (strain ATCC BAA-381 / DSM 21671 / CCUG 45161 / LMG 19568 / NCTC 13146 / CH001A).